The primary structure comprises 498 residues: Angiopoietin-4 (498 aa).

The signal sequence occupies residues 1–22 (MPSPPAMLLGGLLLIVASTTVA). Residues 51 to 80 (EPEPCPPEPEAFGGSNSLQRDSPAATLNLG) form a disordered region. Residues 85-109 (QRMRQLEKMLENNTQWLQKLERYIQ) adopt a coiled-coil conformation. Residues N96, N126, N158, N247, N295, N306, N332, and N424 are each glycosylated (N-linked (GlcNAc...) asparagine). Positions 186 to 254 (HELHRLQGHN…SSNSSLLQRQ (69 aa)) form a coiled coil. The 221-residue stretch at 277–497 (RAADQLFQDC…TTRMMVRPSG (221 aa)) folds into the Fibrinogen C-terminal domain. C286 and C315 form a disulfide bridge. C439 and C452 are oxidised to a cystine.

Homodimer; disulfide-linked. Interacts with TEK/TIE2.

The protein resides in the secreted. Functionally, binds to TEK/TIE2, modulating ANGPT1 signaling. Can induce tyrosine phosphorylation of TEK/TIE2. Promotes endothelial cell survival, migration and angiogenesis. The polypeptide is Angiopoietin-4 (ANGPT4) (Bos taurus (Bovine)).